The sequence spans 133 residues: Probable mitochondrial pyruvate carrier 2 (133 aa).

3 helical membrane passes run V40–A57, A73–I91, and F100–Y116.

The protein belongs to the mitochondrial pyruvate carrier (MPC) (TC 2.A.105) family.

The protein localises to the mitochondrion inner membrane. In terms of biological role, may mediate the uptake of pyruvate into mitochondria. This chain is Probable mitochondrial pyruvate carrier 2, found in Caenorhabditis elegans.